Reading from the N-terminus, the 314-residue chain is BURP domain-containing protein 8 (314 aa).

The first 16 residues, Met1 to Gly16, serve as a signal peptide directing secretion. The BURP domain occupies Phe98–Asn314.

As to expression, expressed in shoot and panicles.

This is BURP domain-containing protein 8 (BURP8) from Oryza sativa subsp. japonica (Rice).